Reading from the N-terminus, the 250-residue chain is Tetrahydromethanopterin S-methyltransferase subunit D (250 aa).

A run of 6 helical transmembrane segments spans residues 9–29, 47–67, 86–106, 144–164, 184–204, and 230–250; these read IIWM…VHFV, GTVQ…GFMM, IMIA…VGVV, IIGG…LIEV, LVAV…VIPS, and LVAS…LGGI.

The protein belongs to the MtrD family. As to quaternary structure, the complex is composed of 8 subunits; MtrA, MtrB, MtrC, MtrD, MtrE, MtrF, MtrG and MtrH.

It is found in the cell membrane. It carries out the reaction 5-methyl-5,6,7,8-tetrahydromethanopterin + coenzyme M + 2 Na(+)(in) = 5,6,7,8-tetrahydromethanopterin + methyl-coenzyme M + 2 Na(+)(out). It functions in the pathway one-carbon metabolism; methanogenesis from CO(2); methyl-coenzyme M from 5,10-methylene-5,6,7,8-tetrahydromethanopterin: step 2/2. Functionally, part of a complex that catalyzes the formation of methyl-coenzyme M and tetrahydromethanopterin from coenzyme M and methyl-tetrahydromethanopterin. This is an energy-conserving, sodium-ion translocating step. In Methanosarcina barkeri (strain Fusaro / DSM 804), this protein is Tetrahydromethanopterin S-methyltransferase subunit D.